The chain runs to 209 residues: Ribosomal RNA large subunit methyltransferase E (209 aa).

Residues G63, W65, D83, D99, and D124 each contribute to the S-adenosyl-L-methionine site. Residue K164 is the Proton acceptor of the active site.

The protein belongs to the class I-like SAM-binding methyltransferase superfamily. RNA methyltransferase RlmE family.

Its subcellular location is the cytoplasm. It catalyses the reaction uridine(2552) in 23S rRNA + S-adenosyl-L-methionine = 2'-O-methyluridine(2552) in 23S rRNA + S-adenosyl-L-homocysteine + H(+). Functionally, specifically methylates the uridine in position 2552 of 23S rRNA at the 2'-O position of the ribose in the fully assembled 50S ribosomal subunit. In Shigella dysenteriae serotype 1 (strain Sd197), this protein is Ribosomal RNA large subunit methyltransferase E.